Consider the following 267-residue polypeptide: UPF0162 protein HI_1558 (267 aa).

It belongs to the UPF0162 family.

In Haemophilus influenzae (strain ATCC 51907 / DSM 11121 / KW20 / Rd), this protein is UPF0162 protein HI_1558.